The primary structure comprises 209 residues: Large ribosomal subunit protein bL25 (209 aa).

The tract at residues 190–209 (PDASAAPVAAPAAPAKKGKK) is disordered.

It belongs to the bacterial ribosomal protein bL25 family. CTC subfamily. As to quaternary structure, part of the 50S ribosomal subunit; part of the 5S rRNA/L5/L18/L25 subcomplex. Contacts the 5S rRNA. Binds to the 5S rRNA independently of L5 and L18.

This is one of the proteins that binds to the 5S RNA in the ribosome where it forms part of the central protuberance. The protein is Large ribosomal subunit protein bL25 of Delftia acidovorans (strain DSM 14801 / SPH-1).